A 555-amino-acid chain; its full sequence is Transcription factor kojR (555 aa).

Residues 21 to 47 (CETCKLRKRKCDGHEPCTYCLRYEYQC) constitute a DNA-binding region (zn(2)-C6 fungal-type). The disordered stretch occupies residues 51 to 73 (PHPRRKPAASKSSARPSEEEDSP).

Its subcellular location is the nucleus. Its function is as follows. Transcription factor that regulates the gene cluster that mediates the biosynthesis of 5-hydroxy-2-hydroxymethyl-1,4-pyrone, also know as kojic acid, a by-product in the fermentation process of malting rice that acts as a chelation agent. Negatively regulates the expression of the kojic acid-related protein kap1. Improves the antioxidant capacity via the accumulation of kojic acid that is also a strong oxidant. This chain is Transcription factor kojR, found in Aspergillus oryzae (strain ATCC 42149 / RIB 40) (Yellow koji mold).